Consider the following 247-residue polypeptide: Protein McbF (247 aa).

The ABC transporter domain occupies 6–234 (LEINSLSFSY…NNETTQKRHL (229 aa)). 40–47 (GENPAGKT) lines the ATP pocket.

The protein belongs to the ABC transporter superfamily.

Together with two further proteins McbE and McbG this protein causes immunity to the peptide antibiotic microcin B17, which inhibits DNA replication in enterobacteriaceae. Immunity is determined by two different mechanisms. McbE is involved in the production of extracellular MccB17 and, in a complex with mcbf it also serves as 'pump' for the export of active MccB17 from the cytoplasm to the periplasmic space. The chain is Protein McbF (mcbF) from Escherichia coli.